A 1891-amino-acid polypeptide reads, in one-letter code: Protein TIC 214 (1891 aa).

Helical transmembrane passes span 18-38 (IINS…FSIG), 64-84 (FITG…HLAL), 87-107 (PHTI…WNNH), 124-144 (LSIQ…HFIL), 172-192 (VGWL…LVWI), and 221-241 (IFSI…PSPI). Disordered stretches follow at residues 248 to 300 (EASK…EGWD), 788 to 807 (EEQT…DNKR), and 1580 to 1607 (KNRS…NLSP). Residues 256–268 (VESEEERDVEIET) are compositionally biased toward acidic residues. A compositionally biased stretch (basic and acidic residues) spans 1582 to 1601 (RSQEAKEPPSQRERGSDIEN).

It belongs to the TIC214 family. In terms of assembly, part of the Tic complex.

The protein resides in the plastid. It localises to the chloroplast inner membrane. Functionally, involved in protein precursor import into chloroplasts. May be part of an intermediate translocation complex acting as a protein-conducting channel at the inner envelope. The chain is Protein TIC 214 from Solanum lycopersicum (Tomato).